The chain runs to 144 residues: Small ribosomal subunit protein bS16 (144 aa).

The interval 115-144 is disordered; that stretch reads NEPVAEAVTPKKKAKKDDAAAESTEAEAAE.

The protein belongs to the bacterial ribosomal protein bS16 family.

The polypeptide is Small ribosomal subunit protein bS16 (Nocardia farcinica (strain IFM 10152)).